A 404-amino-acid polypeptide reads, in one-letter code: Chorismate synthase (404 aa).

NADP(+) contacts are provided by Arg-40 and Arg-46. Residues Arg-135–Ser-137, Gln-256–Ala-257, Gly-300, Lys-315–Thr-319, and Arg-341 each bind FMN.

It belongs to the chorismate synthase family. Homotetramer. FMNH2 serves as cofactor.

The enzyme catalyses 5-O-(1-carboxyvinyl)-3-phosphoshikimate = chorismate + phosphate. It participates in metabolic intermediate biosynthesis; chorismate biosynthesis; chorismate from D-erythrose 4-phosphate and phosphoenolpyruvate: step 7/7. In terms of biological role, catalyzes the anti-1,4-elimination of the C-3 phosphate and the C-6 proR hydrogen from 5-enolpyruvylshikimate-3-phosphate (EPSP) to yield chorismate, which is the branch point compound that serves as the starting substrate for the three terminal pathways of aromatic amino acid biosynthesis. This reaction introduces a second double bond into the aromatic ring system. The chain is Chorismate synthase from Mycobacterium sp. (strain JLS).